We begin with the raw amino-acid sequence, 414 residues long: Probable cytochrome P450 127A1 (414 aa).

Heme is bound at residue Cys-364.

This sequence belongs to the cytochrome P450 family. It depends on heme as a cofactor.

Cytochromes P450 are a group of heme-thiolate monooxygenases. They oxidize a variety of structurally unrelated compounds, including steroids, fatty acids, and xenobiotics. The chain is Probable cytochrome P450 127A1 (cyp127A1) from Sinorhizobium fredii (strain NBRC 101917 / NGR234).